The primary structure comprises 380 residues: F-box/kelch-repeat protein At3g18720 (380 aa).

Residues 47–94 form the F-box domain; it reads LWDKQIPTDLLQEILSRLGLKANIHASLVCKTWLKEAVSVRKFQSRPW. Kelch repeat units lie at residues 190–233 and 234–279; these read CVIS…INRC and IFSN…LVRQ.

This chain is F-box/kelch-repeat protein At3g18720, found in Arabidopsis thaliana (Mouse-ear cress).